A 123-amino-acid chain; its full sequence is rRNA-processing protein cgr-1 (123 aa).

Positions 1–13 (MSSTTTTTQTTSQ) are enriched in low complexity. Disordered stretches follow at residues 1-47 (MSST…GLTS) and 85-123 (EKRA…LINS). Residues 49–110 (EKRAKERQLL…EKMHKKRVER (62 aa)) adopt a coiled-coil conformation. The segment covering 85–102 (EKRAKKEEKERYEKMAEK) has biased composition (basic and acidic residues). A compositionally biased stretch (basic residues) spans 103-123 (MHKKRVERLKRKEKRNKLINS).

The protein belongs to the CGR1 family.

It localises to the nucleus. The protein localises to the nucleolus. Its function is as follows. Involved in nucleolar integrity and required for processing of the pre-rRNA for the 60S ribosome subunit. The polypeptide is rRNA-processing protein cgr-1 (cgr-1) (Neurospora crassa (strain ATCC 24698 / 74-OR23-1A / CBS 708.71 / DSM 1257 / FGSC 987)).